Reading from the N-terminus, the 329-residue chain is tRNA-modifying protein YgfZ (329 aa).

Residues Trp32 and Trp190 each coordinate folate.

This sequence belongs to the tRNA-modifying YgfZ family.

It localises to the cytoplasm. Folate-binding protein involved in regulating the level of ATP-DnaA and in the modification of some tRNAs. It is probably a key factor in regulatory networks that act via tRNA modification, such as initiation of chromosomal replication. The sequence is that of tRNA-modifying protein YgfZ from Photobacterium profundum (strain SS9).